The sequence spans 208 residues: Outer-membrane lipoprotein carrier protein (208 aa).

A signal peptide spans 1-21 (MKRTATLLVVALILALNTAQA).

Belongs to the LolA family. As to quaternary structure, monomer.

The protein resides in the periplasm. Its function is as follows. Participates in the translocation of lipoproteins from the inner membrane to the outer membrane. Only forms a complex with a lipoprotein if the residue after the N-terminal Cys is not an aspartate (The Asp acts as a targeting signal to indicate that the lipoprotein should stay in the inner membrane). The chain is Outer-membrane lipoprotein carrier protein from Halorhodospira halophila (strain DSM 244 / SL1) (Ectothiorhodospira halophila (strain DSM 244 / SL1)).